A 918-amino-acid polypeptide reads, in one-letter code: Exostosin-like 3 (918 aa).

Residues 1 to 30 are Cytoplasmic-facing; the sequence is MTGYTMLRNGGVGNGGQTCMLRWSNRIRLT. Residues 1–140 form a required for interaction with REG3A region; it reads MTGYTMLRNG…LKNVISQTEH (140 aa). Residues 31–51 form a helical; Signal-anchor for type II membrane protein membrane-spanning segment; that stretch reads WLSFTLFIILVFFPLIAHYYL. Topologically, residues 52–918 are lumenal; that stretch reads TTLDEADEAG…HDKTKCFKFI (867 aa). Intrachain disulfides connect Cys-177/Cys-182 and Cys-188/Cys-236. An N-linked (GlcNAc...) asparagine glycan is attached at Asn-290. Ser-361 is modified (phosphoserine). Residues Cys-399 and Cys-414 are joined by a disulfide bond. N-linked (GlcNAc...) asparagine glycosylation occurs at Asn-591. The UDP-N-acetyl-alpha-D-glucosamine site is built by Leu-667, Arg-671, Asn-696, Asn-722, Arg-727, Asp-743, Asp-744, and Asp-745. Asp-745 provides a ligand contact to Mn(2+). Residue Asn-789 is glycosylated (N-linked (GlcNAc...) asparagine). The cysteines at positions 830 and 878 are disulfide-linked. UDP-N-acetyl-alpha-D-glucosamine-binding residues include Glu-831, Asp-832, and Arg-875. The active site involves Asp-832.

Belongs to the glycosyltransferase 47 family. Homodimer; disulfide-linked. Interacts with REG3A. Mn(2+) serves as cofactor. In terms of tissue distribution, expressed in pancreatic islet beta-cells. Expressed in lung epithelial cells. Expressed in microglia.

Its subcellular location is the endoplasmic reticulum membrane. It is found in the golgi apparatus. The protein resides in the cell membrane. The protein localises to the nucleus. It carries out the reaction 3-O-(beta-D-GlcA-(1-&gt;3)-beta-D-Gal-(1-&gt;3)-beta-D-Gal-(1-&gt;4)-beta-D-Xyl)-L-seryl-[protein] + UDP-N-acetyl-alpha-D-glucosamine = 3-O-(alpha-D-GlcNAc-(1-&gt;4)-beta-D-GlcA-(1-&gt;3)-beta-D-Gal-(1-&gt;3)-beta-D-Gal-(1-&gt;4)-beta-D-Xyl)-L-seryl-[protein] + UDP + H(+). It functions in the pathway glycan metabolism; heparan sulfate biosynthesis. Functionally, glycosyltransferase which regulates the biosynthesis of heparan sulfate (HS). Initiates HS synthesis by transferring the first N-acetyl-alpha-D-glucosamine (alpha-GlcNAc) residue (GlcNAcT-I activity) to the tetrasaccharide linker (GlcA-Gal-Gal-Xyl-)Ser core linker. May also transfer alpha-GlcNAc residues during HS elongation (GlcNAcT-II activity). Lacks glucuronyl transferase II (GlcAT-II) activity. Important for both skeletal development and hematopoiesis, through the formation of HS proteoglycans (HSPGs). Through the synthesis of HS, regulates postnatal pancreatic islet maturation and insulin secretion. Receptor for REG3A, REG3B and REG3G, induces the activation of downstream signaling pathways such as PI3K-AKT or RAS-RAF-MEK-ERK signaling pathway. Required for the function of REG3A in regulating keratinocyte proliferation and differentiation. Required for the inhibition of skin inflammation mediated by REG3A through the activation of PI3K-AKT-STAT3 pathway. Required for the function of REG3A and REG3G in glucose tolerance in pancreas. Expressed in microglia, is activated by nociceptor-derived REG3G in response to endotoxins, leading to the inhibition of kynurenine pathway to prevent endotoxic death. This is Exostosin-like 3 from Mus musculus (Mouse).